The following is a 204-amino-acid chain: Fluoride-specific ion channel FluC 3 (204 aa).

Residues M1–T16 show a composition bias toward basic and acidic residues. A disordered region spans residues M1 to P53. Residues R32–E46 are compositionally biased toward pro residues. A run of 4 helical transmembrane segments spans residues V62–L82, F96–I116, P125–T145, and A158–I178. Na(+) contacts are provided by G133 and T136.

This sequence belongs to the fluoride channel Fluc/FEX (TC 1.A.43) family.

Its subcellular location is the cell membrane. It catalyses the reaction fluoride(in) = fluoride(out). Its activity is regulated as follows. Na(+) is not transported, but it plays an essential structural role and its presence is essential for fluoride channel function. Its function is as follows. Fluoride-specific ion channel. Important for reducing fluoride concentration in the cell, thus reducing its toxicity. This Streptomyces avermitilis (strain ATCC 31267 / DSM 46492 / JCM 5070 / NBRC 14893 / NCIMB 12804 / NRRL 8165 / MA-4680) protein is Fluoride-specific ion channel FluC 3.